The primary structure comprises 538 residues: T-complex protein 1 subunit epsilon (538 aa).

It belongs to the TCP-1 chaperonin family. Heterooligomeric complex of about 850 to 900 kDa that forms two stacked rings, 12 to 16 nm in diameter.

It localises to the cytoplasm. Molecular chaperone; assists the folding of proteins upon ATP hydrolysis. Known to play a role, in vitro, in the folding of actin and tubulin. The protein is T-complex protein 1 subunit epsilon (cct5) of Dictyostelium discoideum (Social amoeba).